The chain runs to 585 residues: Organic cation transporter 1 (585 aa).

Residues Met-1–Gln-40 are Cytoplasmic-facing. A helical membrane pass occupies residues Ile-41–Asn-61. Residues Ile-62–Glu-155 lie on the Extracellular side of the membrane. N-linked (GlcNAc...) asparagine glycosylation is found at Asn-87, Asn-98, and Asn-133. Residues Ile-156 to Ala-176 form a helical membrane-spanning segment. Topologically, residues Asp-177 to Ser-184 are cytoplasmic. Residues Phe-185–Ile-205 form a helical membrane-spanning segment. The Extracellular segment spans residues Glu-206 to Arg-212. Residues Phe-213–Phe-233 form a helical membrane-spanning segment. Topologically, residues Met-234–Gly-243 are cytoplasmic. Residues Leu-244–Ile-264 form a helical membrane-spanning segment. At Arg-265–Gln-269 the chain is on the extracellular side. A helical membrane pass occupies residues Leu-270–Glu-290. The Cytoplasmic segment spans residues Ser-291 to Thr-360. A helical membrane pass occupies residues Leu-361–Val-381. At Ser-382 to Tyr-389 the chain is on the extracellular side. A helical transmembrane segment spans residues Trp-390–Leu-410. Residues Gln-411–Arg-416 lie on the Cytoplasmic side of the membrane. A helical membrane pass occupies residues Trp-417–Pro-437. Topologically, residues Asp-438 to Ser-446 are extracellular. A helical transmembrane segment spans residues Ala-447–Gly-467. At Glu-468–Ala-476 the chain is on the cytoplasmic side. A helical transmembrane segment spans residues Ile-477 to Val-497. The Extracellular segment spans residues Asn-498 to Lys-504. A helical membrane pass occupies residues Ile-505–Leu-525. At Pro-526–Ile-585 the chain is on the cytoplasmic side. Positions Gly-544–Ile-585 are disordered. The span at Arg-575–Ile-585 shows a compositional bias: basic residues.

Belongs to the major facilitator (TC 2.A.1) superfamily. Organic cation transporter (TC 2.A.1.19) family.

The protein localises to the membrane. Functionally, transports organic cations such as tetraethylammonium (TEA). Displays a broad substrate specificity. This chain is Organic cation transporter 1 (oct-1), found in Caenorhabditis elegans.